The chain runs to 902 residues: Glycogen phosphorylase (902 aa).

Residues Met1–His21 are disordered. Phosphothreonine is present on Thr31. Position 333 is a phosphoserine (Ser333). N6-(pyridoxal phosphate)lysine is present on Lys751.

It belongs to the glycogen phosphorylase family. Homodimer. Pyridoxal 5'-phosphate is required as a cofactor.

Its subcellular location is the cytoplasm. It is found in the cytosol. The enzyme catalyses [(1-&gt;4)-alpha-D-glucosyl](n) + phosphate = [(1-&gt;4)-alpha-D-glucosyl](n-1) + alpha-D-glucose 1-phosphate. With respect to regulation, activated by phosphorylation of Thr-31. Functionally, phosphorylase is an important allosteric enzyme in carbohydrate metabolism. Enzymes from different sources differ in their regulatory mechanisms and in their natural substrates. However, all known phosphorylases share catalytic and structural properties. This chain is Glycogen phosphorylase (GPH1), found in Saccharomyces cerevisiae (strain ATCC 204508 / S288c) (Baker's yeast).